The primary structure comprises 212 residues: 2',3'-cyclic-nucleotide 3'-phosphodiesterase (212 aa).

H51 acts as the Proton donor/acceptor in catalysis. T53 serves as a coordination point for substrate. Residue H146 is the Proton donor/acceptor of the active site. Substrate is bound by residues S148 and Y151.

Belongs to the 2H phosphoesterase superfamily. CPD1 family.

Its subcellular location is the golgi apparatus. The enzyme catalyses a nucleoside 2',3'-cyclic phosphate + H2O = a nucleoside 2'-phosphate + H(+). In terms of biological role, involved in the metabolism of ADP-ribose 1',2'-cyclic phosphate which is produced as a consequence of tRNA splicing. In Neurospora crassa (strain ATCC 24698 / 74-OR23-1A / CBS 708.71 / DSM 1257 / FGSC 987), this protein is 2',3'-cyclic-nucleotide 3'-phosphodiesterase (cpd-7).